A 185-amino-acid chain; its full sequence is Ribosome-recycling factor (185 aa).

It belongs to the RRF family.

Its subcellular location is the cytoplasm. Its function is as follows. Responsible for the release of ribosomes from messenger RNA at the termination of protein biosynthesis. May increase the efficiency of translation by recycling ribosomes from one round of translation to another. This Parafrankia sp. (strain EAN1pec) protein is Ribosome-recycling factor.